A 1485-amino-acid polypeptide reads, in one-letter code: Chromosome partition protein MukB (1485 aa).

34–41 (GGNGAGKS) serves as a coordination point for ATP. 6 coiled-coil regions span residues 337-480 (LNLV…QAYQ), 509-605 (QHLA…PVWL), 780-805 (RAARENRLETLYQERDRLAERYATLS), 835-915 (EAEI…IQQH), 977-1116 (GMLT…AKAG), and 1210-1235 (EAIEQMEIELGRLTEELTAREQKLAI). The interval 666-783 (PSGAEDARLI…EVPLFGRAAR (118 aa)) is flexible hinge.

This sequence belongs to the SMC family. MukB subfamily. As to quaternary structure, homodimerization via its hinge domain. Binds to DNA via its C-terminal region. Interacts, and probably forms a ternary complex, with MukE and MukF via its C-terminal region. The complex formation is stimulated by calcium or magnesium. Interacts with tubulin-related protein FtsZ.

It localises to the cytoplasm. It is found in the nucleoid. Functionally, plays a central role in chromosome condensation, segregation and cell cycle progression. Functions as a homodimer, which is essential for chromosome partition. Involved in negative DNA supercoiling in vivo, and by this means organize and compact chromosomes. May achieve or facilitate chromosome segregation by condensation DNA from both sides of a centrally located replisome during cell division. The protein is Chromosome partition protein MukB of Yersinia pseudotuberculosis serotype O:1b (strain IP 31758).